Reading from the N-terminus, the 595-residue chain is Aspartate--tRNA(Asp/Asn) ligase (595 aa).

Position 175 (Glu175) interacts with L-aspartate. The segment at 199 to 202 (QQYK) is aspartate. L-aspartate contacts are provided by Arg221 and His454. 221–223 (RDE) provides a ligand contact to ATP. ATP is bound at residue Glu488. Arg495 serves as a coordination point for L-aspartate. ATP is bound at residue 540–543 (GIDR).

This sequence belongs to the class-II aminoacyl-tRNA synthetase family. Type 1 subfamily. Homodimer.

It localises to the cytoplasm. It carries out the reaction tRNA(Asx) + L-aspartate + ATP = L-aspartyl-tRNA(Asx) + AMP + diphosphate. Its function is as follows. Aspartyl-tRNA synthetase with relaxed tRNA specificity since it is able to aspartylate not only its cognate tRNA(Asp) but also tRNA(Asn). Reaction proceeds in two steps: L-aspartate is first activated by ATP to form Asp-AMP and then transferred to the acceptor end of tRNA(Asp/Asn). The polypeptide is Aspartate--tRNA(Asp/Asn) ligase (Brucella canis (strain ATCC 23365 / NCTC 10854 / RM-666)).